A 285-amino-acid polypeptide reads, in one-letter code: Glutamate racemase (285 aa).

Substrate is bound by residues 28–29 and 60–61; these read DS and YG. The active-site Proton donor/acceptor is the C92. 93–94 lines the substrate pocket; that stretch reads NT. C204 acts as the Proton donor/acceptor in catalysis. 205-206 is a substrate binding site; sequence TH.

It belongs to the aspartate/glutamate racemases family.

The enzyme catalyses L-glutamate = D-glutamate. Its pathway is cell wall biogenesis; peptidoglycan biosynthesis. Its function is as follows. Provides the (R)-glutamate required for cell wall biosynthesis. This is Glutamate racemase from Escherichia coli O6:H1 (strain CFT073 / ATCC 700928 / UPEC).